We begin with the raw amino-acid sequence, 738 residues long: MAPWLQLCSFFFTVNACLNGSQLAVAAGGSGRARGADTCGWRGVGPASRNSGLHNITFRYDNCTTYLNPGGKHAIADAQNITISQYACHDQVAVTILWSPGALGIEFLKGFRVILEELKSEGRQCQQLILKDPKQLNSSFRRTGMESQPFLNMKFETDYFVKIVPFPSIKNESNYHPFFFRTRACDLLLQPDNLACKPFWKPRNLNISQHGSDMHVSFDHAPQNFGFRGFHVLYKLKHEGPFRRRTCRQDQNTETTSCLLQNVSPGDYIIELVDDSNTTRKAAQYVVKSVQSPWAGPIRAVAITVPLVVISAFATLFTVMCRKKQQENIYSHLDEESPESSTYAAALPRDRLRPQPKVFLCYSNKDGQNHMNVVQCFAYFLQDFCGCEVALDLWEDFSLCREGQREWAIQKIHESQFIIVVCSKGMKYFVDKKNFRHKGGSRGEAQGEFFLVAVAAIAEKLRQAKQSSSAALRKFIAVYFDYSCEGDVPCSLDLSTKYKLMDHLPELCAHLHSGEQEVLGQHPGHSSRRNYFRSKSGRSLYVAICNMHQFIDEEPDWFEKQFIPFQHPPVRYQEPVLEKFDSGLVLNDVISKPGPESDFCRKVEACVLGAAGPADSYSYLESQHVGLDQDTEAQPSCDSAPALQPLLHAVKAGSPSEMPRDSGIYDSSVPSSELSLPLMEGLSPDQIETSSLTESVSSSSGLGEEDPPTLPSKLLASGVSREHGCHSHTDELQALAPL.

The first 16 residues, 1–16 (MAPWLQLCSFFFTVNA), serve as a signal peptide directing secretion. Over 17 to 299 (CLNGSQLAVA…VQSPWAGPIR (283 aa)) the chain is Extracellular. N-linked (GlcNAc...) asparagine glycosylation is found at N19, N55, N62, N80, N137, N171, N206, and N277. The helical transmembrane segment at 300 to 320 (AVAITVPLVVISAFATLFTVM) threads the bilayer. The Cytoplasmic portion of the chain corresponds to 321–738 (CRKKQQENIY…TDELQALAPL (418 aa)). The SEFIR domain maps to 355–509 (QPKVFLCYSN…LMDHLPELCA (155 aa)). Positions 653–738 (GSPSEMPRDS…TDELQALAPL (86 aa)) are disordered. Low complexity predominate over residues 667–702 (SSVPSSELSLPLMEGLSPDQIETSSLTESVSSSSGL). Positions 720 to 731 (SREHGCHSHTDE) are enriched in basic and acidic residues.

In terms of assembly, self-associates. Interacts with FGFR2 and phosphorylated MAP2K1 or MAP2K2. Associates with a MAP2K1/2-MAPK1/3 complex. Interacts with FGFR1 and MAP3K7.

The protein localises to the golgi apparatus membrane. The protein resides in the cell membrane. Its function is as follows. Feedback inhibitor of fibroblast growth factor mediated Ras-MAPK signaling and ERK activation. Regulates the nuclear ERK signaling pathway by spatially blocking nuclear translocation of activated ERK. Mediates JNK activation and may be involved in apoptosis. May inhibit FGF-induced FGFR1 tyrosine phosphorylation. Might have a role in the early stages of fate specification of GnRH-secreting neurons. Inhibits TGFB-induced epithelial-to-mesenchymal transition in lens epithelial cells. In Mus musculus (Mouse), this protein is Interleukin-17 receptor D (Il17rd).